The following is a 401-amino-acid chain: L-rhamnonate dehydratase (401 aa).

Substrate is bound by residues histidine 29 and arginine 55. Mg(2+) is bound by residues aspartate 222, glutamate 248, and glutamate 276. Histidine 325 (proton acceptor) is an active-site residue. Glutamate 345 provides a ligand contact to substrate.

Belongs to the mandelate racemase/muconate lactonizing enzyme family. RhamD subfamily. As to quaternary structure, homooctamer; tetramer of dimers. It depends on Mg(2+) as a cofactor.

The catalysed reaction is L-rhamnonate = 2-dehydro-3-deoxy-L-rhamnonate + H2O. Catalyzes the dehydration of L-rhamnonate to 2-keto-3-deoxy-L-rhamnonate (KDR). This Escherichia coli O157:H7 protein is L-rhamnonate dehydratase.